The sequence spans 535 residues: Large neutral amino acids transporter small subunit 2 (535 aa).

A compositionally biased stretch (basic residues) spans 1 to 10 (MEKGARHRHN). A disordered region spans residues 1-30 (MEKGARHRHNTDKNHAGGSESEDFPEASSG). At 1-44 (MEKGARHRHNTDKNHAGGSESEDFPEASSGGGGVALKKEIGLVS) the chain is on the cytoplasmic side. S19, S28, and S29 each carry phosphoserine. The chain crosses the membrane as a helical span at residues 45-65 (ACGIIVGNIIGSGIFVSPKGV). I53 provides a ligand contact to L-leucine. Residues 66 to 73 (LENAGSVG) are Extracellular-facing. A helical membrane pass occupies residues 74-95 (LAVIVWIVTGLITAVGALCYAE). At 96–116 (LGVTIPKSGGDYSYVKDIFGG) the chain is on the cytoplasmic side. A helical transmembrane segment spans residues 117–149 (LAGFLRLWIAVLVIYPTNQAVIALTFSNYVLQP). Position 134 (N134) interacts with L-tryptophan. At 150–157 (LFPTCFPP) the chain is on the extracellular side. Residues 158-178 (DSGLRLLAAICLLLLTWVNCS) form a helical membrane-spanning segment. Residues 179–181 (SVR) are Cytoplasmic-facing. The chain crosses the membrane as a helical span at residues 182-210 (WATRVQDIFTAGKLLALALIIIMGVVQIC). The Extracellular segment spans residues 211–230 (KGEYFWLEPKNAFDNFQEPD). The helical transmembrane segment at 231 to 252 (IGLIALAFLQGSFAYGGWNFLN) threads the bilayer. G246 contacts L-leucine. At 253 to 265 (YVTEELVDPYKNL) the chain is on the cytoplasmic side. Residues 266–287 (PRAIFISIPLVTFVYVFANVAY) traverse the membrane as a helical segment. The Extracellular portion of the chain corresponds to 288-312 (ITAMSPQELLASNAVAVTFGEKLLG). Residues 313–338 (VMAWIMPISVALSTFGGVNGSLFTSS) traverse the membrane as a helical segment. Residues 339 to 364 (RLFFAGAREGHLPSVLAMIHVKRCTP) lie on the Cytoplasmic side of the membrane. Residues 365-382 (IPALLFTCLSTLLMLVTS) traverse the membrane as a helical segment. The Extracellular segment spans residues 383–386 (DMYT). A helical membrane pass occupies residues 387-408 (LINYVGFINYLFYGVTVAGQIV). N395 contributes to the L-tryptophan binding site. Residues 409 to 423 (LRWKKPDIPRPIKIN) are Cytoplasmic-facing. The next 2 helical transmembrane spans lie at 424–446 (LLFP…WSEP) and 447–466 (VVCG…YFLG). The Cytoplasmic portion of the chain corresponds to 467 to 535 (VYWQHKPKCF…DKDSLEQSQP (69 aa)). The tract at residues 500–535 (GGSGTEGTREDMEEQQQPICQPSPGKDKDSLEQSQP) is disordered. The segment covering 524–535 (GKDKDSLEQSQP) has biased composition (basic and acidic residues). At S529 the chain carries Phosphoserine.

The protein belongs to the amino acid-polyamine-organocation (APC) superfamily. L-type amino acid transporter (LAT) (TC 2.A.3.8) family. Disulfide-linked heterodimer composed of the catalytic light chain subunit SLC7A8 and the heavy chain subunit SLC3A2. SLC3A2 acts as a chaperone for correct plasma membrane trafficking and stabilization of SLC7A8 and modulates the substrate affinity and specificity of SLC7A8. ICAM-1 associates with the heterodimer SLC3A2/SLC7A8; facilitates leucine uptake. Mainly expressed in kidney and small intestine.

The protein resides in the cell membrane. The protein localises to the basolateral cell membrane. The catalysed reaction is L-histidine(in) + L-phenylalanine(out) = L-histidine(out) + L-phenylalanine(in). It carries out the reaction L-tryptophan(in) + L-phenylalanine(out) = L-tryptophan(out) + L-phenylalanine(in). The enzyme catalyses L-isoleucine(in) + L-phenylalanine(out) = L-isoleucine(out) + L-phenylalanine(in). It catalyses the reaction L-valine(in) + L-phenylalanine(out) = L-valine(out) + L-phenylalanine(in). The catalysed reaction is L-leucine(in) + L-phenylalanine(out) = L-leucine(out) + L-phenylalanine(in). It carries out the reaction L-glutamine(in) + L-phenylalanine(out) = L-glutamine(out) + L-phenylalanine(in). The enzyme catalyses L-cysteine(in) + L-phenylalanine(out) = L-cysteine(out) + L-phenylalanine(in). It catalyses the reaction L-phenylalanine(out) + L-methionine(in) = L-phenylalanine(in) + L-methionine(out). The catalysed reaction is L-leucine(out) + L-methionine(in) = L-leucine(in) + L-methionine(out). It carries out the reaction L-cysteine(out) + L-methionine(in) = L-cysteine(in) + L-methionine(out). The enzyme catalyses S-methylmercury-L-cysteine(out) + L-methionine(in) = S-methylmercury-L-cysteine(in) + L-methionine(out). It catalyses the reaction S-methylmercury-L-cysteine(in) + L-leucine(out) = S-methylmercury-L-cysteine(out) + L-leucine(in). The catalysed reaction is S-methylmercury-L-cysteine(in) + L-phenylalanine(out) = S-methylmercury-L-cysteine(out) + L-phenylalanine(in). It carries out the reaction L-phenylalanine(out) + L-serine(in) = L-phenylalanine(in) + L-serine(out). The enzyme catalyses L-phenylalanine(out) + glycine(in) = L-phenylalanine(in) + glycine(out). It catalyses the reaction L-phenylalanine(out) + L-alanine(in) = L-phenylalanine(in) + L-alanine(out). The catalysed reaction is 3,3',5-triiodo-L-thyronine(out) = 3,3',5-triiodo-L-thyronine(in). It carries out the reaction 3,3'-diiodo-L-thyronine(out) = 3,3'-diiodo-L-thyronine(in). The enzyme catalyses L-dopa(out) + L-phenylalanine(in) = L-dopa(in) + L-phenylalanine(out). Its activity is regulated as follows. The transporter activity is inhibited by 2-aminobicyclo-(2,2,1)heptane-2-carboxylic acid (BCH) (a specific inhibitor of system L transport). Functionally, associates with SLC3A2 to form a functional heterodimeric complex that translocates small and large neutral amino acids with broad specificity and a stoichiometry of 1:1. Functions as amino acid antiporter mediating the influx of extracellular essential amino acids mainly in exchange with the efflux of highly concentrated intracellular amino acids. Has relatively symmetrical selectivities but strongly asymmetrical substrate affinities at both the intracellular and extracellular sides of the transporter. This asymmetry allows SLC7A8 to regulate intracellular amino acid pools (mM concentrations) by exchange with external amino acids (uM concentration range), equilibrating the relative concentrations of different amino acids across the plasma membrane instead of mediating their net uptake. May play an essential role in the reabsorption of neutral amino acids from the epithelial cells to the bloodstream in the kidney. Involved in the uptake of methylmercury (MeHg) when administered as the L-cysteine or D,L-homocysteine complexes, and hence plays a role in metal ion homeostasis and toxicity. Involved in the cellular activity of small molecular weight nitrosothiols, via the stereoselective transport of L-nitrosocysteine (L-CNSO) across the transmembrane. Imports the thyroid hormone diiodothyronine (T2) and to a smaller extent triiodothyronine (T3) but not rT 3 or thyroxine (T4). Mediates the uptake of L-DOPA. May participate in auditory function. This is Large neutral amino acids transporter small subunit 2 from Oryctolagus cuniculus (Rabbit).